The chain runs to 214 residues: Uridine kinase (214 aa).

An ATP-binding site is contributed by 15 to 22 (GASASGKS).

Belongs to the uridine kinase family.

The protein resides in the cytoplasm. It catalyses the reaction uridine + ATP = UMP + ADP + H(+). It carries out the reaction cytidine + ATP = CMP + ADP + H(+). Its pathway is pyrimidine metabolism; CTP biosynthesis via salvage pathway; CTP from cytidine: step 1/3. The protein operates within pyrimidine metabolism; UMP biosynthesis via salvage pathway; UMP from uridine: step 1/1. This Aeromonas hydrophila subsp. hydrophila (strain ATCC 7966 / DSM 30187 / BCRC 13018 / CCUG 14551 / JCM 1027 / KCTC 2358 / NCIMB 9240 / NCTC 8049) protein is Uridine kinase.